The primary structure comprises 337 residues: MLQLILHHPYASLAAGILLYFFCLATYRLYLSPVAGFPGPRLAALTRFYEYYYDGVKGGQFVWKVKDLHQKYGRLSCSTVVGQELKLEQGPIVRIGPCELHVNDPTFVSTLYPATGQRRNKDPFWTDQFGPKTAFGTVDHDHHRLRRGPFNRFFSKANVTRLEPMLRQQANKLCEKLEKYAGTGRVIDLSDPFGCMATDIISTYALGYSFNFLDAEDFQPNLLQGLNGFTPLAPTVKQFPWLLKLLRALPDSWALKINPKIAPFLDFQRTMKKVITDVEAEVQSEAGRPKADQATTIFHEVLRGDIPPEEKETARLWQEGEAIIGAGTFLQTPQEAV.

Residues 4 to 24 (LILHHPYASLAAGILLYFFCL) traverse the membrane as a helical segment. Asparagine 158 carries an N-linked (GlcNAc...) asparagine glycan.

Belongs to the cytochrome P450 family. Heme is required as a cofactor.

The protein localises to the membrane. It participates in secondary metabolite biosynthesis; terpenoid biosynthesis. Cytochrome P450 monooxygenase; part of the gene cluster that mediates the biosynthesis of diterpenoid pyrones. The first step of the pathway is the synthesis of the alpha-pyrone moiety by the polyketide synthase dpmpA via condensation of one acetyl-CoA starter unit with 3 malonyl-CoA units and 2 methylations. The alpha-pyrone is then combined with geranylgeranyl pyrophosphate (GGPP) formed by the GGPP synthase dpmpD through the action of the prenyltransferase dpmpC to yield a linear alpha-pyrone diterpenoid. Subsequent steps in the diterpenoid pyrone biosynthetic pathway involve the decalin core formation, which is initiated by the epoxidation of the C10-C11 olefin by the FAD-dependent oxidoreductase dpmpE, and is followed by a cyclization cascade catalyzed by the terpene cyclase dpmpB. The short chain dehydrogenase/reductase dpmpG then oxidizes the 8S hydroxy group to a ketone and the short chain dehydrogenase/reductase dpmpH reduces the ketone to the 8R hydroxy group to yield higginsianin B. Higginsianin B is further methylated by the methyltransferase dpmpI to produce the intermediate named FDDP B. The cytochrome P450 monooxygenase dpmpJ then oxidizes the C-26 methyl to primary alcohol, producing the final diterpenoid pyrone with a C-26 primary alcohol on the gamma-pyrone moiety named FDDP C. In Macrophomina phaseolina (strain MS6) (Charcoal rot fungus), this protein is Cytochrome P450 monooxygenase dpmpJ.